A 168-amino-acid polypeptide reads, in one-letter code: G/U mismatch-specific DNA glycosylase (168 aa).

The protein belongs to the uracil-DNA glycosylase (UDG) superfamily. TDG/mug family. As to quaternary structure, binds DNA as a monomer.

It localises to the cytoplasm. The catalysed reaction is Specifically hydrolyzes mismatched double-stranded DNA and polynucleotides, releasing free uracil.. Functionally, excises ethenocytosine and uracil, which can arise by alkylation or deamination of cytosine, respectively, from the corresponding mispairs with guanine in ds-DNA. It is capable of hydrolyzing the carbon-nitrogen bond between the sugar-phosphate backbone of the DNA and the mispaired base. The complementary strand guanine functions in substrate recognition. Required for DNA damage lesion repair in stationary-phase cells. This is G/U mismatch-specific DNA glycosylase from Salmonella paratyphi B (strain ATCC BAA-1250 / SPB7).